The sequence spans 274 residues: Undecaprenyl-diphosphatase (274 aa).

A run of 6 helical transmembrane segments spans residues 44-64, 85-105, 109-129, 185-205, 214-234, and 247-267; these read AKVFDIAIQTGAIFAVILVYW, LNVVIGFLPAVVLGLLFGKMI, LFIPVVVASTFIIGGFIILWA, ATDFSFFLAIPTLIGAGAYSL, VADIPLFSVGLVFSFISAWLC, and FIPFAWYRIAFGIVVLATAWT.

The protein belongs to the UppP family.

The protein localises to the cell inner membrane. It catalyses the reaction di-trans,octa-cis-undecaprenyl diphosphate + H2O = di-trans,octa-cis-undecaprenyl phosphate + phosphate + H(+). Catalyzes the dephosphorylation of undecaprenyl diphosphate (UPP). Confers resistance to bacitracin. The sequence is that of Undecaprenyl-diphosphatase from Variovorax paradoxus (strain S110).